The sequence spans 143 residues: 3-hydroxyacyl-[acyl-carrier-protein] dehydratase FabZ (143 aa).

The active site involves His48.

This sequence belongs to the thioester dehydratase family. FabZ subfamily.

The protein localises to the cytoplasm. The catalysed reaction is a (3R)-hydroxyacyl-[ACP] = a (2E)-enoyl-[ACP] + H2O. In terms of biological role, involved in unsaturated fatty acids biosynthesis. Catalyzes the dehydration of short chain beta-hydroxyacyl-ACPs and long chain saturated and unsaturated beta-hydroxyacyl-ACPs. This is 3-hydroxyacyl-[acyl-carrier-protein] dehydratase FabZ from Roseiflexus sp. (strain RS-1).